Here is a 119-residue protein sequence, read N- to C-terminus: UPF0145 protein Bcep18194_B0595 (119 aa).

This sequence belongs to the UPF0145 family.

The chain is UPF0145 protein Bcep18194_B0595 from Burkholderia lata (strain ATCC 17760 / DSM 23089 / LMG 22485 / NCIMB 9086 / R18194 / 383).